Here is a 482-residue protein sequence, read N- to C-terminus: Aspartyl/glutamyl-tRNA(Asn/Gln) amidotransferase subunit B (482 aa).

This sequence belongs to the GatB/GatE family. GatB subfamily. As to quaternary structure, heterotrimer of A, B and C subunits.

The catalysed reaction is L-glutamyl-tRNA(Gln) + L-glutamine + ATP + H2O = L-glutaminyl-tRNA(Gln) + L-glutamate + ADP + phosphate + H(+). It carries out the reaction L-aspartyl-tRNA(Asn) + L-glutamine + ATP + H2O = L-asparaginyl-tRNA(Asn) + L-glutamate + ADP + phosphate + 2 H(+). Allows the formation of correctly charged Asn-tRNA(Asn) or Gln-tRNA(Gln) through the transamidation of misacylated Asp-tRNA(Asn) or Glu-tRNA(Gln) in organisms which lack either or both of asparaginyl-tRNA or glutaminyl-tRNA synthetases. The reaction takes place in the presence of glutamine and ATP through an activated phospho-Asp-tRNA(Asn) or phospho-Glu-tRNA(Gln). The protein is Aspartyl/glutamyl-tRNA(Asn/Gln) amidotransferase subunit B of Methanoregula boonei (strain DSM 21154 / JCM 14090 / 6A8).